A 253-amino-acid chain; its full sequence is Pimeloyl-[acyl-carrier protein] methyl ester esterase (253 aa).

Residues Trp-18, 78–79, and 139–143 each bind substrate; these read SL and FLALD. The Nucleophile role is filled by Ser-78. Catalysis depends on residues Asp-203 and His-231. Residue His-231 coordinates substrate.

It belongs to the AB hydrolase superfamily. Carboxylesterase BioH family. In terms of assembly, monomer.

Its subcellular location is the cytoplasm. It carries out the reaction 6-carboxyhexanoyl-[ACP] methyl ester + H2O = 6-carboxyhexanoyl-[ACP] + methanol + H(+). It participates in cofactor biosynthesis; biotin biosynthesis. In terms of biological role, the physiological role of BioH is to remove the methyl group introduced by BioC when the pimeloyl moiety is complete. It allows to synthesize pimeloyl-ACP via the fatty acid synthetic pathway through the hydrolysis of the ester bonds of pimeloyl-ACP esters. The polypeptide is Pimeloyl-[acyl-carrier protein] methyl ester esterase (Xanthomonas campestris pv. campestris (strain 8004)).